We begin with the raw amino-acid sequence, 1823 residues long: MWKLLLVALAFALADAQFQPGKVYRYSYDAFSISGLPEPGVNRAGLSGEMKIEIHGHTHNQATLKITQVNLKYFLGPWPSDSFYPLTAGYDHFIQQLEVPVRFDYSAGRIGDIYAPPQVTDTAVNIVRGILNLFQLSLKKNQQTFELQETGVEGICQTTYVVQEGYRTNEMAVVKTKDLNNCDHKVYKTMGTAYAERCPTCQKMNKNLRSTAVYNYAIFDEPSGYIIKSAHSEEIQQLSVFDIKEGNVVIESRQKLILEGIQSAPAASQAASLQNRGGLMYKFPSSAITKMSSLFVTKGKNLESEIHTVLKHLVENNQLSVHEDAPAKFLRLTAFLRNVDAGVLQSIWHKLHQQKDYRRWILDAVPAMATSEALLFLKRTLASEQLTSAEATQIVYSTLSNQQATRESLSYARELLHTSFIRNRPILRKTAVLGYGSLVFRYCANTVSCPDELLQPLHDLLSQSSDRADEEEIVLALKALGNAGQPNSIKKIQRFLPGQGKSLDEYSTRVQAEAIMALRNIAKRDPRKVQEIVLPIFLNVAIKSELRIRSCIVFFESKPSVALVSMVAVRLRREPNLQVASFVYSQMRSLSRSSNPEFRDVAAACSVAIKMLGSKLDRLGCRYSKAVHVDTFNARTMAGVSADYFRINSPSGPLPRAVAAKIRGQGMGYASDIVEFGLRAEGLQELLYRGSQEQDAYGTALDRQTLLRSGQARSHVSSIHDTLRKLSDWKSVPEERPLASGYVKVHGQEVVFAELDKKMMQRISQLWHSARSHHAAAQEQIRAVVSKLEQGMDVLLTKGYVVSEVRYMQPVCIGIPMDLNLLVSGVTTNRANLHASFSQSLPADMKLADLLATNIELRVAATTSMSQHAVAIMGLTTDLAKAGMQTHYKTSAGLGVNGKIEMNARESNFKASLKPFQQKTVVVLSTMESIVFVRDPSGSRILPVLPPKMTLDKGLISQQQQQPHHQQQPHQHGQDQARAAYQRPWASHEFSPAEQKQIHDIMTARPVMRRKQHCSKSAALSSKVCFSARLRNAAFIRNALLYKITGDYVSKVYVQPTSSKAQIQKVELELQAGPQAAEKVIRMVELVAKASKKSKKNSTITEEGVGETIISQLKKILSSDKDKDAKKPPGSSSSSSSSSSSSSSSSSSDKSGKKTPRQGSTVNLAAKRASKKQRGKDSSSSSSSSSSSSDSSKSPHKHGGAKRQHAGHGAPHLGPQSHSSSSSSSSSSSSSSASKSFSTVKPPMTRKPRPARSSSSSSSSDSSSSSSSSSSSSSSSSSSSSSSSESKSLEWLAVKDVNQSAFYNFKYVPQRKPQTSRRHTPASSSSSSSSSSSSSSSSSSSDSDMTVSAESFEKHSKPKVVIVLRAVRADGKQQGLQTTLYYGLTSNGLPKAKIVAVELSDLSVWKLCAKFRLSAHMKAKAAIGWGKNCQQYRAMLEASTGNLQSHPAARVDIKWGRLPSSLQRAKNALLENKAPVIASKLEMEIMPKKNQKHQVSVILAAMTPRRMNIIVKLPKVTYFQQGILLPFTFPSPRFWDRPEGSQSDSLPAQIASAFSGIVQDPVASACELNEQSLTTFNGAFFNYDMPESCYHVLAQECSSRPPFIVLIKLDSERRISLELQLDDKKVKIVSRNDIRVDGEKVPLRRLSQKNQYGFLVLDAGVHLLLKYKDLRVSFNSSSVQVWVPSSLKGQTCGLCGRNDDELVTEMRMPNLEVAKDFTSFAHSWIAPDETCGGACALSRQTVHKESTSVISGSRENCYSTEPIMRCPATCSASRSVPVSVAMHCLPAESEAISLAMSEGRPFSLSGKSEDLVTEMEAHVSCVA.

The N-terminal stretch at 1–14 (MWKLLLVALAFALA) is a signal peptide. Q17 carries the pyrrolidone carboxylic acid modification. Residues 18 to 658 (FQPGKVYRYS…SPSGPLPRAV (641 aa)) enclose the Vitellogenin domain. The interval 953-986 (KGLISQQQQQPHHQQQPHQHGQDQARAAYQRPWA) is disordered. Residues 958 to 976 (QQQQQPHHQQQPHQHGQDQ) are compositionally biased toward low complexity. N1097 carries N-linked (GlcNAc...) asparagine glycosylation. Residues 1119–1289 (SDKDKDAKKP…SSSSSESKSL (171 aa)) are disordered. 2 stretches are compositionally biased toward low complexity: residues 1128 to 1149 (PPGS…SSSD) and 1178 to 1192 (SSSS…SDSS). Basic residues predominate over residues 1194–1206 (SPHKHGGAKRQHA). Composition is skewed to low complexity over residues 1217-1238 (SHSS…KSFS) and 1253-1286 (SSSS…SSES). N-linked (GlcNAc...) asparagine glycosylation is present at N1298. The segment at 1308 to 1351 (VPQRKPQTSRRHTPASSSSSSSSSSSSSSSSSSSDSDMTVSAES) is disordered. The span at 1323-1344 (SSSSSSSSSSSSSSSSSSSDSD) shows a compositional bias: low complexity. The VWFD domain maps to 1564–1732 (SACELNEQSL…SWIAPDETCG (169 aa)). 2 disulfide bridges follow: C1566/C1695 and C1589/C1731. N1675 is a glycosylation site (N-linked (GlcNAc...) asparagine).

What corresponds to phosvitin in other species is lost during maturation of vitellogenin to lipovitellin. As to expression, produced by the liver, secreted into the blood and then sequestered by receptor mediated endocytosis into growing oocytes, where it is generally cleaved, giving rise to the respective yolk components lipovitellins 1 and 2.

Precursor of the major egg-yolk proteins that are sources of nutrients during early development of oviparous organisms. The protein is Vitellogenin of Ichthyomyzon unicuspis (Silver lamprey).